The chain runs to 250 residues: Recombination protein RecR (250 aa).

The segment at C56–C71 adopts a C4-type zinc-finger fold. The Toprim domain occupies S79–P227. The tract at residues L148–T172 is disordered.

It belongs to the RecR family.

May play a role in DNA repair. It seems to be involved in an RecBC-independent recombinational process of DNA repair. It may act with RecF and RecO. In Corynebacterium jeikeium (strain K411), this protein is Recombination protein RecR.